The chain runs to 198 residues: FMN-dependent NADH:quinone oxidoreductase (198 aa).

An FMN-binding site is contributed by M92–L95.

It belongs to the azoreductase type 1 family. Homodimer. Requires FMN as cofactor.

The catalysed reaction is 2 a quinone + NADH + H(+) = 2 a 1,4-benzosemiquinone + NAD(+). It carries out the reaction N,N-dimethyl-1,4-phenylenediamine + anthranilate + 2 NAD(+) = 2-(4-dimethylaminophenyl)diazenylbenzoate + 2 NADH + 2 H(+). Its function is as follows. Quinone reductase that provides resistance to thiol-specific stress caused by electrophilic quinones. Functionally, also exhibits azoreductase activity. Catalyzes the reductive cleavage of the azo bond in aromatic azo compounds to the corresponding amines. This chain is FMN-dependent NADH:quinone oxidoreductase, found in Clostridium beijerinckii (strain ATCC 51743 / NCIMB 8052) (Clostridium acetobutylicum).